We begin with the raw amino-acid sequence, 1127 residues long: uncharacterized protein (1127 aa).

The N-terminal stretch at 1–26 (MRIHQRSAPCVPVLLFLFLPSAPLCA) is a signal peptide. The interval 533 to 600 (ETESLSPPAD…ASSSPSEMAV (68 aa)) is disordered. Low complexity-rich tracts occupy residues 536-549 (SLSPPADTASTPSP) and 583-599 (AGASEEADASSSPSEMA). The stretch at 1076–1126 (SEDEKEYQRALQELQKGNKLVASAVVEQLLQKDRNKKSAKIQQLKKRIDAQ) forms a coiled coil.

This is an uncharacterized protein from Treponema pallidum (strain Nichols).